The chain runs to 375 residues: Sulfite efflux pump SSU1 (375 aa).

Over M1 to A25 the chain is Cytoplasmic. Residues I26–L46 traverse the membrane as a helical segment. Residues L47 to Y59 are Extracellular-facing. The helical transmembrane segment at I60–I80 threads the bilayer. Topologically, residues T81 to M101 are cytoplasmic. Residues L102 to V122 form a helical membrane-spanning segment. At P123–G135 the chain is on the extracellular side. The helical transmembrane segment at L136–M156 threads the bilayer. Residues T157 to T167 are Cytoplasmic-facing. A helical membrane pass occupies residues A168–A188. The Extracellular portion of the chain corresponds to D189 to T200. N-linked (GlcNAc...) asparagine glycosylation occurs at N193. Residues I201–I221 traverse the membrane as a helical segment. At Y222–R234 the chain is on the cytoplasmic side. Residues A235 to M255 form a helical membrane-spanning segment. The Extracellular segment spans residues Q256–D277. The chain crosses the membrane as a helical span at residues I278–L298. Over W299–K309 the chain is Cytoplasmic. The helical transmembrane segment at F310–T330 threads the bilayer. Over T331 to D343 the chain is Extracellular. Residues I344–T364 traverse the membrane as a helical segment. At V365 to R375 the chain is on the cytoplasmic side.

Belongs to the tellurite-resistance/dicarboxylate transporter (TDT) family.

It localises to the cell membrane. In terms of biological role, sulphite efflux pump required for the secretion of sulphite as a reducing agent. In the presence of sulphite, cystine in keratin is directly cleaved to cysteine and S-sulphocysteine, and thereby, reduced proteins become accessible to hydrolysis by a variety of secreted endo- and exoproteases. Excretion of sulphite mediated by an efflux pump also represents a detoxification pathway for dermatophytes during infection of the epidermal stratum corneum, hair and nails, which are rich in cysteine. This Trichophyton rubrum (Athlete's foot fungus) protein is Sulfite efflux pump SSU1 (SSU1).